The sequence spans 499 residues: MNKKYIMAIDQGTTSTRAMIFNHRGEVVSKSQQEFSQIYPKPGWVEHSPDEIWVSILGVMSGALRSKGISPKEIAAIGITNQRETTVIWDKNTDEPVYNAIVWQCRRTTDICQELKNNGLEDKFKEKTGLVLDPYFSGTKIKWILDNVAGARQKAKNGDLLFGTIDSWLIWKLTGGKVHVTDYTNASRTLLYNIHELDWDEELLDILGIPESILPEVKASSTIYGNTVPYHFFGEEVPISGIAGDQQAATFAQGCYEKGMTKITYGTGGFMLMNTGKEAVTSDNGLLTTIAWGLDDGIYYALEGSIFNAGSAIQWLRDELDLIEDAADSEYFASKVEDTGGVYVVPAFTGLGAPYWDPRARGIIVGLTRGTNKNHLIRATIESLIYQSKDVLMAMVEDSGLDLKDIKVDGGAAANNLLLQFLSDMTGSRVERPINTETTAAGAAYLAGLAIDFWTDQEEVLKIRKVDREFNPDMSGEKREQLYRGWKKAINAALSWSKT.

Position 13 (T13) interacts with ADP. ATP-binding residues include T13, T14, and S15. T13 provides a ligand contact to sn-glycerol 3-phosphate. R17 contributes to the ADP binding site. R83, E84, Y135, and D245 together coordinate sn-glycerol 3-phosphate. Glycerol-binding residues include R83, E84, Y135, D245, and Q246. ADP is bound by residues T267 and G310. T267, G310, Q314, and G411 together coordinate ATP. ADP-binding residues include G411 and N415.

It belongs to the FGGY kinase family. As to quaternary structure, homotetramer and homodimer (in equilibrium).

It catalyses the reaction glycerol + ATP = sn-glycerol 3-phosphate + ADP + H(+). It functions in the pathway polyol metabolism; glycerol degradation via glycerol kinase pathway; sn-glycerol 3-phosphate from glycerol: step 1/1. With respect to regulation, activated by phosphorylation and inhibited by fructose 1,6-bisphosphate (FBP). Functionally, key enzyme in the regulation of glycerol uptake and metabolism. Catalyzes the phosphorylation of glycerol to yield sn-glycerol 3-phosphate. The chain is Glycerol kinase from Halothermothrix orenii (strain H 168 / OCM 544 / DSM 9562).